The sequence spans 214 residues: Mediator of RNA polymerase II transcription subunit 29 (214 aa).

Residues 1–78 (MMNQMGMHMQ…QQQSQQTEKV (78 aa)) are disordered. Positions 15–34 (VPGGPGGPVGMAGGPVGGVG) are enriched in gly residues. Low complexity predominate over residues 44–74 (QMQQQQQVAAQQQQQQQQQQQAQAHQQQSQQ).

It belongs to the Mediator complex subunit 29 family. As to quaternary structure, component of the Mediator complex.

The protein localises to the nucleus. Component of the Mediator complex, a coactivator involved in the regulated transcription of nearly all RNA polymerase II-dependent genes. Mediator functions as a bridge to convey information from gene-specific regulatory proteins to the basal RNA polymerase II transcription machinery. Mediator is recruited to promoters by direct interactions with regulatory proteins and serves as a scaffold for the assembly of a functional preinitiation complex with RNA polymerase II and the general transcription factors. In Aedes aegypti (Yellowfever mosquito), this protein is Mediator of RNA polymerase II transcription subunit 29 (ix).